Reading from the N-terminus, the 310-residue chain is Malate dehydrogenase (310 aa).

NAD(+)-binding positions include 7 to 12 (GAGNVG) and Asp-32. Arg-81 and Arg-87 together coordinate substrate. NAD(+) is bound by residues Asn-94 and 117 to 119 (VSN). The substrate site is built by Asn-119 and Arg-150. His-174 serves as the catalytic Proton acceptor.

Belongs to the LDH/MDH superfamily. MDH type 3 family.

The catalysed reaction is (S)-malate + NAD(+) = oxaloacetate + NADH + H(+). Functionally, catalyzes the reversible oxidation of malate to oxaloacetate. This is Malate dehydrogenase from Chloroherpeton thalassium (strain ATCC 35110 / GB-78).